Reading from the N-terminus, the 228-residue chain is Geranylgeranylglyceryl phosphate synthase (228 aa).

Lysine 14 is a binding site for sn-glycerol 1-phosphate. Mg(2+)-binding residues include aspartate 16 and threonine 42. Residues tyrosine 160–glycine 165, glycine 190, and glycine 210–asparagine 211 each bind sn-glycerol 1-phosphate.

This sequence belongs to the GGGP/HepGP synthase family. Group I subfamily. Mg(2+) serves as cofactor.

It localises to the cytoplasm. It catalyses the reaction sn-glycerol 1-phosphate + (2E,6E,10E)-geranylgeranyl diphosphate = sn-3-O-(geranylgeranyl)glycerol 1-phosphate + diphosphate. It participates in membrane lipid metabolism; glycerophospholipid metabolism. Its function is as follows. Prenyltransferase that catalyzes the transfer of the geranylgeranyl moiety of geranylgeranyl diphosphate (GGPP) to the C3 hydroxyl of sn-glycerol-1-phosphate (G1P). This reaction is the first ether-bond-formation step in the biosynthesis of archaeal membrane lipids. This Methanocella arvoryzae (strain DSM 22066 / NBRC 105507 / MRE50) protein is Geranylgeranylglyceryl phosphate synthase.